Reading from the N-terminus, the 367-residue chain is MSSSAPKYTTFQGSQNFRLRIVLATLSGKPIKIEKIRSGDLNPGLKDYEVSFLRLIESVTNGSVIEISYTGTTVIYRPGIIVGGASTHICPSSKPVGYFVEPMLYLAPFSKKKFSILFKGITASHNDAGIEAIKWGLMPVMEKFGVRECALHTLKRGSPPLGGGEVHLVVDSLIAQPITMHEIDRPIISSITGVAYSTRVSPSLVNRMIDGAKKVLKNLQCEVNITADVWRGENSGKSPGWGITLVAQSKQKGWSYFAEDIGDAGSIPEELGEKVACQLLEEISKSAAVGRNQLPLAIVYMVIGKEDIGRLRINKEQIDERFIILLRDIKKIFNTEVFLKPVDEADNEDMIATIKGIGFTNTSKKIA.

Residue S2 is modified to N-acetylserine.

The protein belongs to the RNA 3'-terminal cyclase family. Type 2 subfamily. As to quaternary structure, interacts directly with BMS1 and the U3 snoRNA to form a stable subcomplex. Component of the 90S small subunit processome also known as 90S pre-ribosome that consists of the 35S pre-rRNA, early-associating ribosomal proteins most of which are part of the small ribosomal subunit, the U3 snoRNA and associated proteins.

The protein resides in the nucleus. Its subcellular location is the nucleolus. Does not have cyclase activity. Plays a role in 40S-ribosomal-subunit biogenesis in the early pre-rRNA processing steps at sites A0, A1 and A2 that are required for proper maturation of the 18S RNA. RCL1 activates BMS1 by promoting GDP/GTP exchange. This is rRNA processing protein RCL1 (RCL1) from Saccharomyces cerevisiae (strain ATCC 204508 / S288c) (Baker's yeast).